Reading from the N-terminus, the 2931-residue chain is Probable polyketide synthase 9/36 (2931 aa).

Residues 11 to 442 (EKGVAIVGIG…GSNCCLLISE (432 aa)) form the Ketosynthase family 3 (KS3) domain. Active-site for beta-ketoacyl synthase activity residues include C181, H323, and H362. The tract at residues 635–668 (GVNPSFILGHSLGEISASYCSGMIDLDTFCYTVY) is acyl/malonyl transferase. Residue S645 is the For acyl/malonyl transferase activity of the active site. Residues 925–1047 (IDHLGTSNSY…ANFQLLDHGN (123 aa)) form an N-terminal hotdog fold region. Residues 925–1209 (IDHLGTSNSY…CKSLIPIKDS (285 aa)) form the PKS/mFAS DH domain. Residue H959 is the Proton acceptor; for dehydratase activity of the active site. The interval 1064–1209 (NLSKLTKNEL…CKSLIPIKDS (146 aa)) is C-terminal hotdog fold. Residue D1122 is the Proton donor; for dehydratase activity of the active site. Residues 2293 to 2313 (LINFVMASSAISLIGSTDLCT) form a helical membrane-spanning segment. The 78-residue stretch at 2429–2506 (TGNKNIDELF…TSMKMILNSL (78 aa)) folds into the Carrier domain. S2466 bears the O-(pantetheine 4'-phosphoryl)serine mark. Residues 2553–2573 (KIILLTGTTGFLGGFLLFNMV) traverse the membrane as a helical segment.

The cofactor is pantetheine 4'-phosphate.

The protein resides in the membrane. Functionally, probable polyketide synthase. This chain is Probable polyketide synthase 9/36 (pks9), found in Dictyostelium discoideum (Social amoeba).